The following is a 493-amino-acid chain: tRNA-2-methylthio-N(6)-dimethylallyladenosine synthase (493 aa).

Over residues 1–14 (MPMTGLLQTTLSTA) the composition is skewed to polar residues. The disordered stretch occupies residues 1–31 (MPMTGLLQTTLSTADQDRSGPAATTGDTPAR). In terms of domain architecture, MTTase N-terminal spans 35–155 (KRLHVITWGC…LGGMVRRAMN (121 aa)). Positions 44, 80, 118, 199, 203, and 206 each coordinate [4Fe-4S] cluster. One can recognise a Radical SAM core domain in the interval 185 to 417 (LAGGRTAFLT…QALLRTQQEA (233 aa)). Residues 420-482 (TACIGKTVNV…TNSLSATLPD (63 aa)) enclose the TRAM domain.

The protein belongs to the methylthiotransferase family. MiaB subfamily. In terms of assembly, monomer. Requires [4Fe-4S] cluster as cofactor.

It localises to the cytoplasm. The catalysed reaction is N(6)-dimethylallyladenosine(37) in tRNA + (sulfur carrier)-SH + AH2 + 2 S-adenosyl-L-methionine = 2-methylsulfanyl-N(6)-dimethylallyladenosine(37) in tRNA + (sulfur carrier)-H + 5'-deoxyadenosine + L-methionine + A + S-adenosyl-L-homocysteine + 2 H(+). Functionally, catalyzes the methylthiolation of N6-(dimethylallyl)adenosine (i(6)A), leading to the formation of 2-methylthio-N6-(dimethylallyl)adenosine (ms(2)i(6)A) at position 37 in tRNAs that read codons beginning with uridine. This is tRNA-2-methylthio-N(6)-dimethylallyladenosine synthase from Granulibacter bethesdensis (strain ATCC BAA-1260 / CGDNIH1).